A 100-amino-acid polypeptide reads, in one-letter code: UPF0213 protein YhbQ (100 aa).

A GIY-YIG domain is found at 2 to 77 (TPWFLYLIRT…KQLTKRQKER (76 aa)).

The protein belongs to the UPF0213 family.

The polypeptide is UPF0213 protein YhbQ (Escherichia coli O81 (strain ED1a)).